The primary structure comprises 158 residues: SsrA-binding protein (158 aa).

Basic and acidic residues predominate over residues 133–148; it reads KAQDKRETSAKRDWNR. Positions 133–158 are disordered; that stretch reads KAQDKRETSAKRDWNRQKARLLKQNG. Residues 149-158 show a composition bias toward basic residues; that stretch reads QKARLLKQNG.

This sequence belongs to the SmpB family.

Its subcellular location is the cytoplasm. Its function is as follows. Required for rescue of stalled ribosomes mediated by trans-translation. Binds to transfer-messenger RNA (tmRNA), required for stable association of tmRNA with ribosomes. tmRNA and SmpB together mimic tRNA shape, replacing the anticodon stem-loop with SmpB. tmRNA is encoded by the ssrA gene; the 2 termini fold to resemble tRNA(Ala) and it encodes a 'tag peptide', a short internal open reading frame. During trans-translation Ala-aminoacylated tmRNA acts like a tRNA, entering the A-site of stalled ribosomes, displacing the stalled mRNA. The ribosome then switches to translate the ORF on the tmRNA; the nascent peptide is terminated with the 'tag peptide' encoded by the tmRNA and targeted for degradation. The ribosome is freed to recommence translation, which seems to be the essential function of trans-translation. The protein is SsrA-binding protein of Jannaschia sp. (strain CCS1).